Reading from the N-terminus, the 216-residue chain is Octanoyltransferase (216 aa).

In terms of domain architecture, BPL/LPL catalytic spans glutamate 34–histidine 209. Residues arginine 73–histidine 80, serine 140–glycine 142, and glycine 153–alanine 155 contribute to the substrate site. Cysteine 171 functions as the Acyl-thioester intermediate in the catalytic mechanism.

The protein belongs to the LipB family.

The protein resides in the cytoplasm. It catalyses the reaction octanoyl-[ACP] + L-lysyl-[protein] = N(6)-octanoyl-L-lysyl-[protein] + holo-[ACP] + H(+). The protein operates within protein modification; protein lipoylation via endogenous pathway; protein N(6)-(lipoyl)lysine from octanoyl-[acyl-carrier-protein]: step 1/2. Catalyzes the transfer of endogenously produced octanoic acid from octanoyl-acyl-carrier-protein onto the lipoyl domains of lipoate-dependent enzymes. Lipoyl-ACP can also act as a substrate although octanoyl-ACP is likely to be the physiological substrate. This Psychromonas ingrahamii (strain DSM 17664 / CCUG 51855 / 37) protein is Octanoyltransferase.